The chain runs to 1377 residues: DNA-directed RNA polymerase subunit beta' (1377 aa).

The Zn(2+) site is built by C60, C62, C75, and C78. Residues D449, D451, and D453 each contribute to the Mg(2+) site. Positions 777, 851, 858, and 861 each coordinate Zn(2+).

The protein belongs to the RNA polymerase beta' chain family. The RNAP catalytic core consists of 2 alpha, 1 beta, 1 beta' and 1 omega subunit. When a sigma factor is associated with the core the holoenzyme is formed, which can initiate transcription. The cofactor is Mg(2+). Requires Zn(2+) as cofactor.

It catalyses the reaction RNA(n) + a ribonucleoside 5'-triphosphate = RNA(n+1) + diphosphate. In terms of biological role, DNA-dependent RNA polymerase catalyzes the transcription of DNA into RNA using the four ribonucleoside triphosphates as substrates. This chain is DNA-directed RNA polymerase subunit beta', found in Borreliella burgdorferi (strain ZS7) (Borrelia burgdorferi).